Consider the following 644-residue polypeptide: Exoribonuclease 2 (644 aa).

The RNB domain occupies 189-516 (RQDLTALNFV…NHRLLKAVIK (328 aa)). The S1 motif domain maps to 561–643 (NTRFAAEIID…ETRSIIARPA (83 aa)).

It belongs to the RNR ribonuclease family. RNase II subfamily.

The protein localises to the cytoplasm. The enzyme catalyses Exonucleolytic cleavage in the 3'- to 5'-direction to yield nucleoside 5'-phosphates.. Involved in mRNA degradation. Hydrolyzes single-stranded polyribonucleotides processively in the 3' to 5' direction. This is Exoribonuclease 2 from Salmonella enteritidis PT4 (strain P125109).